The primary structure comprises 127 residues: Promotilin (127 aa).

Residues 1-25 form the signal peptide; that stretch reads MLSRKAVAALLLVHVTAMLASQTEG. The disordered stretch occupies residues 41-67; it reads REQNKRLRKSLRVQQRSKAAGRLEPQE.

Belongs to the motilin family. Present in the gut mucosa with the exception of the gastric corpus. Also present in medulla oblongata, nucleus of the solitary tract, hypophysis, spinal cord, hypothalamus, and cerebellum but not in the cerebral cortex.

It is found in the secreted. In terms of biological role, plays an important role in the regulation of interdigestive gastrointestinal motility and indirectly causes rhythmic contraction of duodenal and colonic smooth muscle. The polypeptide is Promotilin (MLN) (Cavia porcellus (Guinea pig)).